Consider the following 388-residue polypeptide: Succinate--CoA ligase [ADP-forming] subunit beta (388 aa).

The ATP-grasp domain maps to 9-244 (KSLFAEYGLP…PSQDDAREAH (236 aa)). ATP contacts are provided by residues Lys46, 53–55 (GRG), Glu99, Thr102, and Glu107. Residues Asn199 and Asp213 each coordinate Mg(2+). Substrate contacts are provided by residues Asn264 and 321–323 (GIV).

Belongs to the succinate/malate CoA ligase beta subunit family. In terms of assembly, heterotetramer of two alpha and two beta subunits. Requires Mg(2+) as cofactor.

The enzyme catalyses succinate + ATP + CoA = succinyl-CoA + ADP + phosphate. It catalyses the reaction GTP + succinate + CoA = succinyl-CoA + GDP + phosphate. The protein operates within carbohydrate metabolism; tricarboxylic acid cycle; succinate from succinyl-CoA (ligase route): step 1/1. Its function is as follows. Succinyl-CoA synthetase functions in the citric acid cycle (TCA), coupling the hydrolysis of succinyl-CoA to the synthesis of either ATP or GTP and thus represents the only step of substrate-level phosphorylation in the TCA. The beta subunit provides nucleotide specificity of the enzyme and binds the substrate succinate, while the binding sites for coenzyme A and phosphate are found in the alpha subunit. In Shewanella putrefaciens (strain CN-32 / ATCC BAA-453), this protein is Succinate--CoA ligase [ADP-forming] subunit beta.